The sequence spans 136 residues: Cytochrome c-550 (136 aa).

The signal sequence occupies residues 1–28 (MTKLTFGALVALAMTAAASTAMSSKAMA). Heme c-binding residues include cysteine 41, cysteine 44, histidine 45, and methionine 107.

Post-translationally, binds 1 heme c group covalently per subunit. In terms of processing, the N-terminus is blocked.

The protein localises to the periplasm. In terms of biological role, plays a role in bacteroid respiration under conditions of oxygen limitation. Required for electron-transfer during denitrification. This Bradyrhizobium diazoefficiens (strain JCM 10833 / BCRC 13528 / IAM 13628 / NBRC 14792 / USDA 110) protein is Cytochrome c-550 (cycA).